Consider the following 1038-residue polypeptide: Protein transport protein SEC24 A (1038 aa).

A disordered region spans residues 1-247; sequence MGTENQGYPN…PPHTGGFAQR (247 aa). A compositionally biased stretch (pro residues) spans 22–33; it reads SAPPPGIPPQSG. Positions 371, 374, 393, and 396 each coordinate Zn(2+). A zinc finger-like region spans residues 371–396; the sequence is CRRCRTYVNPFVTFTDSGRKWRCNIC.

This sequence belongs to the SEC23/SEC24 family. SEC24 subfamily. Component of the coat protein complex II (COPII), composed of at least five proteins: the Sec23/24 complex, the Sec13/31 complex and Sar1. Interacts with SEC221, SEC23E/SEC23A, SEC23B, SEC23G/SEC23C and SEC23F/SEC23D. In terms of assembly, (Microbial infection) Interacts with turnip mosaic virus (TuMV) 6K2 in COPII-coated vesicles. As to expression, mainly expressed in pollen, leaves, inflorescences, roots and stems, and, to a lower extent, in cotyledons, petioles and hypocotyls.

Its subcellular location is the cytoplasmic vesicle. It localises to the COPII-coated vesicle membrane. The protein localises to the endoplasmic reticulum membrane. It is found in the golgi apparatus membrane. The protein resides in the cytoplasm. Its subcellular location is the cytosol. Essential protein. Component of the coat protein complex II (COPII), that covers ER-derived vesicles involved in transport from the endoplasmic reticulum to the Golgi apparatus. COPII is composed of at least five proteins: the SEC23/24 complex, the SEC13/31 complex, and the protein SAR1. Acts in the cytoplasm to promote the transport of secretory, plasma membrane, and vacuolar proteins from the endoplasmic reticulum to the Golgi complex. Involved in maintaining the dynamic identity of organelles of the early secretory pathway. Regulates cell size patterning, and prevents CDKA;1-, DEK1- and ACR4-dependent endoreduplication and giant cells formation in sepals. Required for male gametophytes (pollen grains) development and transmission. Its function is as follows. (Microbial infection) Contributes to viral systemic infection of turnip mosaic virus (TuMV) by triggering the formation of host endoplasmic reticulum (ER)-derived viral vesicles that carry the viral RNA (vRNA) to plasmodesmata for cell-to-cell viral movement. This Arabidopsis thaliana (Mouse-ear cress) protein is Protein transport protein SEC24 A.